The following is a 583-amino-acid chain: Lipoprotein LpqB (583 aa).

The N-terminal stretch at 1-29 is a signal peptide; the sequence is MSNKTTEATKTTKVKKVLSVVAGLGLLAG. Cys-30 carries the N-palmitoyl cysteine lipid modification. A lipid anchor (S-diacylglycerol cysteine) is attached at Cys-30. Positions 38–63 are disordered; that stretch reads NPEAISSYAPAPSGQEAPTPTDGQPS.

It belongs to the LpqB lipoprotein family.

The protein resides in the cell membrane. This chain is Lipoprotein LpqB, found in Corynebacterium jeikeium (strain K411).